Here is a 622-residue protein sequence, read N- to C-terminus: Apical membrane antigen 1 (622 aa).

Positions 1 to 24 (MRKLYCVLLLSAFEFTYMINFGRG) are cleaved as a signal peptide. The Extracellular segment spans residues 25–546 (QNYWEHPYQN…EHKPTYDNMK (522 aa)). Cystine bridges form between cysteine 149–cysteine 302, cysteine 217–cysteine 247, cysteine 263–cysteine 275, cysteine 320–cysteine 418, and cysteine 337–cysteine 409. Asparagine 162 is a glycosylation site (N-linked (GlcNAc...) asparagine). Asparagine 286, asparagine 371, asparagine 421, asparagine 422, and asparagine 499 each carry an N-linked (GlcNAc...) asparagine glycan. Cystine bridges form between cysteine 443-cysteine 502, cysteine 490-cysteine 507, and cysteine 492-cysteine 509. Residues 547–567 (IIIASSAAVAVLATILMVYLY) traverse the membrane as a helical segment. Residues 568–622 (KRKGNAEKYDKMDQPQDYGKSTSRNDEMLDPEASFWGEEKRASHTTPVLMEKPYY) lie on the Cytoplasmic side of the membrane. Residues 577-607 (DKMDQPQDYGKSTSRNDEMLDPEASFWGEEK) are disordered.

The protein belongs to the apicomplexan parasites AMA1 family.

Its subcellular location is the membrane. Functionally, involved in parasite invasion of erythrocytes. This chain is Apical membrane antigen 1 (AMA-1), found in Plasmodium falciparum (isolate Camp / Malaysia).